The chain runs to 254 residues: Imidazole glycerol phosphate synthase subunit HisF (254 aa).

Catalysis depends on residues D13 and D132.

Belongs to the HisA/HisF family. Heterodimer of HisH and HisF.

It is found in the cytoplasm. It catalyses the reaction 5-[(5-phospho-1-deoxy-D-ribulos-1-ylimino)methylamino]-1-(5-phospho-beta-D-ribosyl)imidazole-4-carboxamide + L-glutamine = D-erythro-1-(imidazol-4-yl)glycerol 3-phosphate + 5-amino-1-(5-phospho-beta-D-ribosyl)imidazole-4-carboxamide + L-glutamate + H(+). It participates in amino-acid biosynthesis; L-histidine biosynthesis; L-histidine from 5-phospho-alpha-D-ribose 1-diphosphate: step 5/9. Functionally, IGPS catalyzes the conversion of PRFAR and glutamine to IGP, AICAR and glutamate. The HisF subunit catalyzes the cyclization activity that produces IGP and AICAR from PRFAR using the ammonia provided by the HisH subunit. This Sulfurovum sp. (strain NBC37-1) protein is Imidazole glycerol phosphate synthase subunit HisF.